Consider the following 245-residue polypeptide: tRNA (guanine-N(1)-)-methyltransferase (245 aa).

S-adenosyl-L-methionine contacts are provided by residues Gly-111 and 131–136; that span reads IGDYVL.

Belongs to the RNA methyltransferase TrmD family. As to quaternary structure, homodimer.

Its subcellular location is the cytoplasm. It carries out the reaction guanosine(37) in tRNA + S-adenosyl-L-methionine = N(1)-methylguanosine(37) in tRNA + S-adenosyl-L-homocysteine + H(+). Functionally, specifically methylates guanosine-37 in various tRNAs. The sequence is that of tRNA (guanine-N(1)-)-methyltransferase from Caldicellulosiruptor saccharolyticus (strain ATCC 43494 / DSM 8903 / Tp8T 6331).